The chain runs to 422 residues: Zinc finger protein Gfi-1 (422 aa).

The SNAG domain stretch occupies residues 1 to 20 (MPRSFLVKSKKAHSYHQPRS). The interval 1–109 (MPRSFLVKSK…ASEKSMCPSL (109 aa)) is disordered. Phosphoserine is present on residues Ser20 and Ser56. Residues 140 to 257 (RPCGALERGA…LLLGGGSYKC (118 aa)) are required for interaction with RELA. 6 C2H2-type zinc fingers span residues 255–278 (YKCI…RRSH), 284–306 (FACE…KAVH), 312–334 (FDCK…LLIH), 340–362 (YPCQ…TFIH), 368–390 (HKCQ…SRKH), and 396–419 (FGCD…ETQH).

As to quaternary structure, interacts with U2AF1L4. Component of RCOR-GFI-KDM1A-HDAC complexes. Interacts directly with RCOR1, KDM1A and HDAC2. Also interacts with HDAC1. Interacts (via the zinc-finger domain) with ARIH2; the interaction prevents GFI1 ubiquitination and proteasomal degradation. Interacts with PIAS3; the interaction relieves the inhibitory effect of PIAS3 on STAT3-mediated transcriptional activity. Forms a complex with EHMT2 and HDAC1 to promote 'Lys-9' dimethylation of H3 (H3K9Me2) and repress expression of target genes. Interacts directly with EHMT2. Component of the GFI1-AJUBA-HDAC1 repressor complex. Interacts directly with AJUBA (via ITS LIM domains); the interaction results in the HDAC-dependent corepression of a subset of GFI1 target genes and, occurs independently of the SNAG domain. Interacts with SPI1; the interaction inhibits SPI1 transcriptional activity targeted at macrophage-specific genes, repressing macrophage differentiation of myeloid progenitor cells and promoting granulocyte commitment. Interacts with RUNX1T1; the interaction represses HDAC-mediated transcriptional activity. Interacts with RELA; the interaction occurs on liposaccharide (LPS) stimulation and controls RELA DNA binding activity and regulates endotoxin-mediated TOLL-like receptor inflammatory response. Interacts (via the C-terminal zinc fingers) with ZBTB17; the interaction results in the recruitment of GFI1 to the CDKN1A/p21 and CDKN1B promoters and repression of transcription. Post-translationally, ubiquitinated. Ubiquitination and degradation by the proteasome is inhibited by the ubiquitin ligase, ARIH2.

The protein resides in the nucleus. Its function is as follows. Transcription repressor essential for hematopoiesis. Functions in a cell-context and development-specific manner. Binds to 5'-TAAATCAC[AT]GCA-3' in the promoter region of a large number of genes. Component of several complexes, including the EHMT2-GFI1-HDAC1, AJUBA-GFI1-HDAC1 and RCOR-GFI-KDM1A-HDAC complexes, that suppress, via histone deacetylase (HDAC) recruitment, a number of genes implicated in multilineage blood cell development. Regulates neutrophil differentiation, promotes proliferation of lymphoid cells, and is required for granulocyte development. Inhibits SPI1 transcriptional activity at macrophage-specific genes, repressing macrophage differentiation of myeloid progenitor cells and promoting granulocyte commitment. Mediates, together with U2AF1L4, the alternative splicing of CD45 and controls T-cell receptor signaling. Regulates the endotoxin-mediated Toll-like receptor (TLR) inflammatory response by antagonizing RELA. Cooperates with CBFA2T2 to regulate ITGB1-dependent neurite growth. Controls cell-cycle progression by repressing CDKNIA/p21 transcription in response to TGFB1 via recruitment of GFI1 by ZBTB17 to the CDKNIA/p21 and CDKNIB promoters. Required for the maintenance of inner ear hair cells. In addition to its role in transcription, acts as a substrate adapter for PRMT1 in the DNA damage response: facilitates the recognition of TP53BP1 and MRE11 substrates by PRMT1, promoting their methylation and the DNA damage response. The sequence is that of Zinc finger protein Gfi-1 (GFI1) from Homo sapiens (Human).